The primary structure comprises 121 residues: Cell division protein FtsL (121 aa).

The Cytoplasmic portion of the chain corresponds to 1 to 34 (MISRVTEALSKVKGSMGSHERHALPGVIGDDLLR). Residues 35–57 (FGKLPLCLFICIILTAVTVVTTA) traverse the membrane as a helical segment. The Periplasmic segment spans residues 58–121 (HHTRLLTAQR…PSQENIVVQK (64 aa)).

This sequence belongs to the FtsL family. In terms of assembly, part of a complex composed of FtsB, FtsL and FtsQ.

The protein resides in the cell inner membrane. In terms of biological role, essential cell division protein. May link together the upstream cell division proteins, which are predominantly cytoplasmic, with the downstream cell division proteins, which are predominantly periplasmic. The chain is Cell division protein FtsL from Shigella dysenteriae serotype 1 (strain Sd197).